The chain runs to 453 residues: Serine/threonine-protein phosphatase 2A regulatory subunit B'' subunit gamma (453 aa).

EF-hand domains lie at 273 to 308 (PSALRVYGQYLNLDKDHNGMLSKEELSRYGTATMTN) and 341 to 376 (KEPAALQYIFKLLDIENKGYLNVFSLNYFFRAIQEL). 5 residues coordinate Ca(2+): aspartate 286, aspartate 288, asparagine 290, methionine 292, and glutamate 297.

In terms of assembly, interacts with MCM3AP/GANP. Interacts with PPP5C, and the phosphatase 2A core enzyme composed of the PPP2CA catalytic subunit and the constant regulatory subunit PPP2R1A. Finds in a complex with ABCB1, TFPI2 and PPP2R3C; leading to the dephosphorylation of ABCB1. Ubiquitously expressed in brain and other tissues.

The protein resides in the nucleus. It is found in the cytoplasm. May regulate MCM3AP phosphorylation through phosphatase recruitment. May act as a negative regulator of ABCB1 expression and function through the dephosphorylation of ABCB1 by TFPI2/PPP2R3C complex. May play a role in the activation-induced cell death of B-cells. This Homo sapiens (Human) protein is Serine/threonine-protein phosphatase 2A regulatory subunit B'' subunit gamma (PPP2R3C).